We begin with the raw amino-acid sequence, 239 residues long: Ribosomal RNA large subunit methyltransferase E (239 aa).

G81, W83, D104, D120, and D144 together coordinate S-adenosyl-L-methionine. Residue K184 is the Proton acceptor of the active site.

The protein belongs to the class I-like SAM-binding methyltransferase superfamily. RNA methyltransferase RlmE family.

The protein localises to the cytoplasm. The enzyme catalyses uridine(2552) in 23S rRNA + S-adenosyl-L-methionine = 2'-O-methyluridine(2552) in 23S rRNA + S-adenosyl-L-homocysteine + H(+). Functionally, specifically methylates the uridine in position 2552 of 23S rRNA at the 2'-O position of the ribose in the fully assembled 50S ribosomal subunit. In Rhizobium rhizogenes (strain K84 / ATCC BAA-868) (Agrobacterium radiobacter), this protein is Ribosomal RNA large subunit methyltransferase E.